The primary structure comprises 288 residues: Energy-coupling factor transporter ATP-binding protein EcfA3 (288 aa).

The 243-residue stretch at 3–245 folds into the ABC transporter domain; that stretch reads INFRNVSFSY…ESYLRKEKLR (243 aa). 40 to 47 is a binding site for ATP; that stretch reads GHTGSGKS.

This sequence belongs to the ABC transporter superfamily. Energy-coupling factor EcfA family. Forms a stable energy-coupling factor (ECF) transporter complex composed of 2 membrane-embedded substrate-binding proteins (S component), 2 ATP-binding proteins (A component) and 2 transmembrane proteins (T component).

Its subcellular location is the cell membrane. Functionally, ATP-binding (A) component of a common energy-coupling factor (ECF) ABC-transporter complex. Unlike classic ABC transporters this ECF transporter provides the energy necessary to transport a number of different substrates. This is Energy-coupling factor transporter ATP-binding protein EcfA3 from Oenococcus oeni (strain ATCC BAA-331 / PSU-1).